The sequence spans 108 residues: Parvalbumin beta (108 aa).

Residue Ala1 is modified to N-acetylalanine. EF-hand domains lie at 38 to 73 (KSNEELEAIFKILDQDKSGFIEDEELELFLQNFSAG) and 77 to 108 (LTKTETETFLKAGDSDGDGKIGVDEFQKLVKA). Ca(2+) contacts are provided by Asp51, Asp53, Ser55, Phe57, Glu59, Glu62, Asp90, Asp92, Asp94, Lys96, and Glu101.

Belongs to the parvalbumin family.

In terms of biological role, in muscle, parvalbumin is thought to be involved in relaxation after contraction. It binds two calcium ions. This chain is Parvalbumin beta, found in Latimeria chalumnae (Coelacanth).